A 72-amino-acid chain; its full sequence is MERLNSKLYLQNCYIIKENERLRKKAQILNQENQQLLFELKQKLSKTKNSSGSNQGNNNNNNNLSSSSSASG.

Residues 14–44 (YIIKENERLRKKAQILNQENQQLLFELKQKL) are a coiled coil. A disordered region spans residues 42–72 (QKLSKTKNSSGSNQGNNNNNNNLSSSSSASG). Positions 49-72 (NSSGSNQGNNNNNNNLSSSSSASG) are enriched in low complexity.

As to quaternary structure, interacts with REV.

Functionally, competitive inhibitor of the HD-ZIPIII transcription factors in shoot apical meristem (SAM) development. Acts by forming non-functional heterodimers. Part of a negative feedback loop. Essential for proper functioning of stem cells in the SAM. The sequence is that of Protein LITTLE ZIPPER 4 from Arabidopsis thaliana (Mouse-ear cress).